Consider the following 975-residue polypeptide: Importin-11 (975 aa).

The residue at position 1 (methionine 1) is an N-acetylmethionine. The Importin N-terminal domain occupies 28-100 (AEEQLKQWET…RAGLITNFNE (73 aa)). 15 HEAT repeats span residues 123–160 (RQWP…TLAS), 209–248 (ERTL…RLKQ), 318–356 (VQCM…KMAF), 422–459 (QTLT…AVGL), 473–509 (WFKN…VKFK), 511–548 (DLRP…DFEF), 555–593 (PYLE…RVNM), 600–636 (GCLV…GLGA), 640–677 (NLYP…TLEN), 683–720 (PELL…SSTE), 743–764 (EGQV…ILGP), 765–804 (QMFQ…QNTS), 819–849 (QEMD…KLSA), 850–887 (LALL…EDPE), and 957–974 (METV…FLQG). Position 343 is a phosphoserine (serine 343).

It belongs to the importin beta family. In terms of assembly, interacts with UBE2E3 and RPL12.

It localises to the cytoplasm. The protein localises to the nucleus. Functionally, functions in nuclear protein import as nuclear transport receptor. Serves as receptor for nuclear localization signals (NLS) in cargo substrates. Is thought to mediate docking of the importin/substrate complex to the nuclear pore complex (NPC) through binding to nucleoporin and the complex is subsequently translocated through the pore by an energy requiring, Ran-dependent mechanism. At the nucleoplasmic side of the NPC, Ran binds to the importin, the importin/substrate complex dissociates and importin is re-exported from the nucleus to the cytoplasm where GTP hydrolysis releases Ran. The directionality of nuclear import is thought to be conferred by an asymmetric distribution of the GTP- and GDP-bound forms of Ran between the cytoplasm and nucleus. Mediates the nuclear import of UBE2E3, and of RPL12. The protein is Importin-11 (IPO11) of Homo sapiens (Human).